We begin with the raw amino-acid sequence, 240 residues long: Probable hydroxyacylglutathione hydrolase (240 aa).

His33, His35, Asp37, His38, His95, and Asp119 together coordinate Zn(2+). Substrate is bound by residues Arg128, 158-160 (HEY), and 234-237 (REEK). Position 158 (His158) interacts with Zn(2+).

It belongs to the metallo-beta-lactamase superfamily. Glyoxalase II family. Zn(2+) serves as cofactor.

It catalyses the reaction an S-(2-hydroxyacyl)glutathione + H2O = a 2-hydroxy carboxylate + glutathione + H(+). It participates in secondary metabolite metabolism; methylglyoxal degradation; (R)-lactate from methylglyoxal: step 2/2. In terms of biological role, thiolesterase that catalyzes the hydrolysis of S-D-lactoyl-glutathione to form glutathione and D-lactic acid. This Schistosoma mansoni (Blood fluke) protein is Probable hydroxyacylglutathione hydrolase.